We begin with the raw amino-acid sequence, 333 residues long: Trimethylamine N-oxide-binding protein (333 aa).

A signal peptide spans 1–42 (MRLFREIAANDPGPTGRMKNMKTFTTALATGVLALCPLAALA). Residues Trp-55, Trp-102, Glu-131, Trp-177, and Trp-222 each coordinate trimethylamine N-oxide. Pro-249, Val-251, Asn-254, Ala-257, and Asp-260 together coordinate Ca(2+).

The complex is probably composed of two ATP-binding proteins (TmoW), two transmembrane proteins (TmoV) and a solute-binding protein (TmoX). Monomer in solution, but forms homodimers in crystals.

The protein localises to the periplasm. Binds a Ca(2+) ion, which has little effect on either the binding affinity or the secondary structure, but plays an important role in maintaining the stability of TmoX. It may modulate the protein stability in response to biological needs and environmental changes. Thermostability is dramatically decreased when Ca(2+) is removed by EDTA. Its function is as follows. Part of the ABC transporter complex TmoXWV involved in trimethylamine N-oxide (TMAO) import. Is specific for TMAO and essential for TMAO metabolism. Binds TMAO with high affinity. In vitro, also presents a high binding affinity for choline, however this transporter seems specific for TMAO and the choline-binding affinity presented by recombinant TmoX may not make physiological sense. In Ruegeria pomeroyi (strain ATCC 700808 / DSM 15171 / DSS-3) (Silicibacter pomeroyi), this protein is Trimethylamine N-oxide-binding protein.